The primary structure comprises 122 residues: Small ribosomal subunit protein uS13 (122 aa).

Residues 94 to 122 (KQLPVRGQRTHTNARTRKGKAKPIAGKKK) are disordered.

This sequence belongs to the universal ribosomal protein uS13 family. In terms of assembly, part of the 30S ribosomal subunit. Forms a loose heterodimer with protein S19. Forms two bridges to the 50S subunit in the 70S ribosome.

In terms of biological role, located at the top of the head of the 30S subunit, it contacts several helices of the 16S rRNA. In the 70S ribosome it contacts the 23S rRNA (bridge B1a) and protein L5 of the 50S subunit (bridge B1b), connecting the 2 subunits; these bridges are implicated in subunit movement. Contacts the tRNAs in the A and P-sites. In Methylorubrum populi (strain ATCC BAA-705 / NCIMB 13946 / BJ001) (Methylobacterium populi), this protein is Small ribosomal subunit protein uS13.